Reading from the N-terminus, the 299-residue chain is Protoheme IX farnesyltransferase (299 aa).

A run of 9 helical transmembrane segments spans residues 25–45, 47–67, 95–115, 119–139, 147–167, 173–193, 218–238, 243–263, and 279–299; these read VVLL…RAGV, WTVL…AAAV, AAAI…LLLF, LAAW…TGFL, IVIG…AVTG, PLLL…ALAI, VHIL…YAIH, LYLV…WVLY, and IWYL…LLNI.

Belongs to the UbiA prenyltransferase family. Protoheme IX farnesyltransferase subfamily.

Its subcellular location is the cell inner membrane. It catalyses the reaction heme b + (2E,6E)-farnesyl diphosphate + H2O = Fe(II)-heme o + diphosphate. The protein operates within porphyrin-containing compound metabolism; heme O biosynthesis; heme O from protoheme: step 1/1. Functionally, converts heme B (protoheme IX) to heme O by substitution of the vinyl group on carbon 2 of heme B porphyrin ring with a hydroxyethyl farnesyl side group. The polypeptide is Protoheme IX farnesyltransferase (Ectopseudomonas mendocina (strain ymp) (Pseudomonas mendocina)).